Consider the following 871-residue polypeptide: Translation initiation factor IF-2 (871 aa).

2 disordered regions span residues 60-101 (KKNI…QEVK) and 184-203 (ESLK…KKES). Residues 61–72 (KNIKTPTAKKPK) show a composition bias toward basic residues. The segment covering 73-101 (KENIKEQEKLNESEKKEPKKEEKLKQEVK) has biased composition (basic and acidic residues). Residues 370 to 537 (TRAPVITIMG…IVLLQADILE (168 aa)) enclose the tr-type G domain. The G1 stretch occupies residues 379–386 (GHVDHGKT). 379–386 (GHVDHGKT) serves as a coordination point for GTP. A G2 region spans residues 404–408 (GITQH). A G3 region spans residues 425 to 428 (DTPG). GTP is bound by residues 425-429 (DTPGH) and 479-482 (NKMD). A G4 region spans residues 479–482 (NKMD). The interval 515–517 (SAK) is G5.

The protein belongs to the TRAFAC class translation factor GTPase superfamily. Classic translation factor GTPase family. IF-2 subfamily.

It is found in the cytoplasm. One of the essential components for the initiation of protein synthesis. Protects formylmethionyl-tRNA from spontaneous hydrolysis and promotes its binding to the 30S ribosomal subunits. Also involved in the hydrolysis of GTP during the formation of the 70S ribosomal complex. This Campylobacter jejuni subsp. jejuni serotype O:23/36 (strain 81-176) protein is Translation initiation factor IF-2.